A 406-amino-acid polypeptide reads, in one-letter code: Probable tRNA sulfurtransferase (406 aa).

Residues 60 to 166 form the THUMP domain; sequence EPVMERLKQV…LNGIYLTSAK (107 aa). Residues 184–185, 209–210, Arg-266, Gly-288, and Gln-297 each bind ATP; these read ML and HF.

Belongs to the ThiI family.

Its subcellular location is the cytoplasm. The catalysed reaction is [ThiI sulfur-carrier protein]-S-sulfanyl-L-cysteine + a uridine in tRNA + 2 reduced [2Fe-2S]-[ferredoxin] + ATP + H(+) = [ThiI sulfur-carrier protein]-L-cysteine + a 4-thiouridine in tRNA + 2 oxidized [2Fe-2S]-[ferredoxin] + AMP + diphosphate. It carries out the reaction [ThiS sulfur-carrier protein]-C-terminal Gly-Gly-AMP + S-sulfanyl-L-cysteinyl-[cysteine desulfurase] + AH2 = [ThiS sulfur-carrier protein]-C-terminal-Gly-aminoethanethioate + L-cysteinyl-[cysteine desulfurase] + A + AMP + 2 H(+). It participates in cofactor biosynthesis; thiamine diphosphate biosynthesis. Catalyzes the ATP-dependent transfer of a sulfur to tRNA to produce 4-thiouridine in position 8 of tRNAs, which functions as a near-UV photosensor. Also catalyzes the transfer of sulfur to the sulfur carrier protein ThiS, forming ThiS-thiocarboxylate. This is a step in the synthesis of thiazole, in the thiamine biosynthesis pathway. The sulfur is donated as persulfide by IscS. This chain is Probable tRNA sulfurtransferase, found in Limosilactobacillus fermentum (strain NBRC 3956 / LMG 18251) (Lactobacillus fermentum).